A 211-amino-acid chain; its full sequence is Glycerol-3-phosphate acyltransferase (211 aa).

A run of 5 helical transmembrane segments spans residues 5–25 (VILG…TGYL), 55–75 (GPGL…ILVA), 85–105 (PVPA…AVLA), 126–146 (VLLA…LVVL), and 168–188 (WFFT…AFVI).

This sequence belongs to the PlsY family. As to quaternary structure, probably interacts with PlsX.

Its subcellular location is the cell inner membrane. The catalysed reaction is an acyl phosphate + sn-glycerol 3-phosphate = a 1-acyl-sn-glycero-3-phosphate + phosphate. It participates in lipid metabolism; phospholipid metabolism. Catalyzes the transfer of an acyl group from acyl-phosphate (acyl-PO(4)) to glycerol-3-phosphate (G3P) to form lysophosphatidic acid (LPA). This enzyme utilizes acyl-phosphate as fatty acyl donor, but not acyl-CoA or acyl-ACP. The chain is Glycerol-3-phosphate acyltransferase from Thermosynechococcus vestitus (strain NIES-2133 / IAM M-273 / BP-1).